Here is a 324-residue protein sequence, read N- to C-terminus: Mevalonate-3-kinase (324 aa).

Residue Leu19 participates in substrate binding. 109 to 112 is an ATP binding site; that stretch reads SGSS. Residues Glu145 and Arg149 each coordinate substrate. Residues Arg190 and Ser193 each contribute to the ATP site.

The protein belongs to the GHMP kinase family. Homodimer.

It carries out the reaction (R)-mevalonate + ATP = (R)-3-phosphomevalonate + ADP + H(+). The protein operates within isoprenoid biosynthesis; isopentenyl diphosphate biosynthesis via mevalonate pathway. Its function is as follows. Catalyzes the phosphorylation of mevalonate (MVA) to yield mevalonate-3-phosphate. Functions in an alternative mevalonate pathway, which passes through mevalonate 3-phosphate rather than mevalonate 5-phosphate. Also able to catalyze the formation of isobutene via the conversion of 3-hydroxyisovalerate (3-HIV) to an unstable 3-phosphate intermediate that undergoes a spontaneous decarboxylation. The chain is Mevalonate-3-kinase from Picrophilus torridus (strain ATCC 700027 / DSM 9790 / JCM 10055 / NBRC 100828 / KAW 2/3).